A 476-amino-acid polypeptide reads, in one-letter code: Bifunctional protein HldE (476 aa).

The ribokinase stretch occupies residues 1 to 319; it reads MKVSLPAFEK…RALSVNHGES (319 aa). An ATP-binding site is contributed by 195–198; the sequence is NMGE. Asp264 is an active-site residue. Positions 345–476 are cytidylyltransferase; the sequence is MTNGCFDILH…SIIENIMANQ (132 aa).

In the N-terminal section; belongs to the carbohydrate kinase PfkB family. It in the C-terminal section; belongs to the cytidylyltransferase family. Homodimer.

It carries out the reaction D-glycero-beta-D-manno-heptose 7-phosphate + ATP = D-glycero-beta-D-manno-heptose 1,7-bisphosphate + ADP + H(+). The enzyme catalyses D-glycero-beta-D-manno-heptose 1-phosphate + ATP + H(+) = ADP-D-glycero-beta-D-manno-heptose + diphosphate. The protein operates within nucleotide-sugar biosynthesis; ADP-L-glycero-beta-D-manno-heptose biosynthesis; ADP-L-glycero-beta-D-manno-heptose from D-glycero-beta-D-manno-heptose 7-phosphate: step 1/4. It functions in the pathway nucleotide-sugar biosynthesis; ADP-L-glycero-beta-D-manno-heptose biosynthesis; ADP-L-glycero-beta-D-manno-heptose from D-glycero-beta-D-manno-heptose 7-phosphate: step 3/4. Its function is as follows. Catalyzes the phosphorylation of D-glycero-D-manno-heptose 7-phosphate at the C-1 position to selectively form D-glycero-beta-D-manno-heptose-1,7-bisphosphate. Catalyzes the ADP transfer from ATP to D-glycero-beta-D-manno-heptose 1-phosphate, yielding ADP-D-glycero-beta-D-manno-heptose. This is Bifunctional protein HldE from Shewanella sediminis (strain HAW-EB3).